The sequence spans 1061 residues: Transmembrane protease serine 9 (1061 aa).

At 3–31 (PAAPDLQPVPEVTKGVPVPTPDSGCCRAA) the chain is on the cytoplasmic side. The helical transmembrane segment at 32–52 (VTTVVAISVASLTLGVLSAFL) threads the bilayer. Topologically, residues 53 to 1061 (SAQGVQVEHT…LGWIGQNIRE (1009 aa)) are extracellular. The LDL-receptor class A domain maps to 155 to 192 (HCPGNAFSCQNSQCVSKENPECDDRVDCSDGSDEAQCD). 4 disulfides stabilise this stretch: Cys-156-Cys-168, Cys-163-Cys-182, Cys-176-Cys-191, and Cys-230-Cys-246. A Peptidase S1 1 domain is found at 205–438 (IVGGAEAAPG…LRDWILEVTS (234 aa)). Active-site charge relay system residues include His-245 and Asp-294. Cystine bridges form between Cys-328–Cys-395, Cys-360–Cys-374, and Cys-385–Cys-414. Ser-389 (charge relay system) is an active-site residue. A disordered region spans residues 443–499 (PVVPTEAPAPITPSTPWPTSPESRVPNTTAKPTVAPTPAPLHPSTAAKPQECGARPA). The segment covering 452–461 (PITPSTPWPT) has biased composition (pro residues). A compositionally biased stretch (low complexity) spans 462-476 (SPESRVPNTTAKPTV). Residue Asn-469 is glycosylated (N-linked (GlcNAc...) asparagine). Positions 506–738 (IVGGISAVSG…LKDWILKAMS (233 aa)) constitute a Peptidase S1 2 domain. A disulfide bond links Cys-531 and Cys-547. Residue His-546 is the Charge relay system of the active site. N-linked (GlcNAc...) asparagine glycosylation is present at Asn-549. Catalysis depends on Asp-594, which acts as the Charge relay system. 3 cysteine pairs are disulfide-bonded: Cys-628-Cys-695, Cys-660-Cys-674, and Cys-685-Cys-714. Asn-640 and Asn-665 each carry an N-linked (GlcNAc...) asparagine glycan. Catalysis depends on Ser-689, which acts as the Charge relay system. Low complexity predominate over residues 740-752 (DPSSTAHPHTSST). 2 disordered regions span residues 740–771 (DPSS…IPEA) and 790–810 (LNTT…APGT). A glycan (N-linked (GlcNAc...) asparagine) is linked at Asn-791. Residues 792 to 808 (TTLSARSTTTRRQTPAP) show a composition bias toward low complexity. One can recognise a Peptidase S1 3 domain in the interval 830-1060 (IVGGSAASLG…VLGWIGQNIR (231 aa)). Intrachain disulfides connect Cys-856-Cys-872, Cys-951-Cys-1017, Cys-982-Cys-996, and Cys-1007-Cys-1036.

It belongs to the peptidase S1 family. Proteolytically cleaved to generate 3 independent serine protease chains. The cleaved chains may remain attached to the membrane thanks to disulfide bonds. It is unclear whether cleavage always takes place.

The protein localises to the cell membrane. Inhibited by serine protease inhibitors PMSF and 4-(2-aminoethyl)benzenesulfonyl fluoride, but not by EDTA. Serase-1 and serase-2 are serine proteases that hydrolyze the peptides N-t-Boc-Gln-Ala-Arg-AMC and N-t-Boc-Gln-Gly-Arg-AMC. In contrast, N-t-Boc-Ala-Phe-Lys-AMC and N-t-Boc-Ala-Pro-Ala-AMC are not significantly hydrolyzed. The protein is Transmembrane protease serine 9 (Tmprss9) of Rattus norvegicus (Rat).